Here is a 693-residue protein sequence, read N- to C-terminus: MTDGKLSTSTNGVAFMGILDGRPGNPLQNLQHVNLKAPRLLSAPEYGPKLKLRALEDRHSLQSVDSGIPTLEIGNPEPVPCSAVHVRRKQSDSDLIPERAFQSACALPSCAPPAPSSTEREQSVRKSSTFPRTGYDSVKLYSPTSKALTRSDDVSVCSVSSLGTELSTTLSVSNEDILDLVVTSSSSAIVTLENDDDPQFTNVTLSSIKETRGLHQQDCVHEAEEGSKLKILGPFSNFFARNLLARKQSARLDKHNDLGWKLFGKAPLRENAQKDSKRIQKEYEDKAGRPSKPPSPKQNVRKNLDFEPLSTTALILEDRPANLPAKPAEEAQKHRQQYEEMVVQAKKRELKEAQRRKKQLEERCRVEESIGNAVLTWNNEILPNWETMWCSRKVRDLWWQGIPPSVRGKVWSLAIGNELNITHELFDICLARAKERWRSLSTGGSEVENEDAGFSAADREASLELIKLDISRTFPNLCIFQQGGPYHDMLHSILGAYTCYRPDVGYVQGMSFIAAVLILNLDTADAFIAFSNLLNKPCQMAFFRVDHGLMLTYFAAFEVFFEENLPKLFAHFKKNNLTPDIYLIDWIFTLYSKSLPLDLACRIWDVFCRDGEEFLFRTALGILKLFEDILTKMDFIHMAQFLTRLPEDLPAEELFASIATIQMQSRNKKWAQVLTALQKDSREMEKGSPSLRH.

Phosphoserine is present on Ser-91. Disordered regions lie at residues 108–130 (PSCAPPAPSSTEREQSVRKSSTF) and 271–304 (NAQKDSKRIQKEYEDKAGRPSKPPSPKQNVRKNL). Residues 271–288 (NAQKDSKRIQKEYEDKAG) are compositionally biased toward basic and acidic residues. Ser-295 bears the Phosphoserine mark. The Rab-GAP TBC domain maps to 401-611 (GIPPSVRGKV…RIWDVFCRDG (211 aa)).

Interacts with ULK1. May interact with RAB11A and RAB11B, but does not exhibit any GTPase-activating activity toward these proteins. Interacts with TRAPPC8.

The protein resides in the golgi apparatus. The protein localises to the cis-Golgi network. It is found in the trans-Golgi network. Plays a role in the regulation of starvation-induced autophagosome formation. Together with the TRAPPIII complex, regulates a constitutive trafficking step from peripheral recycling endosomes to the early Golgi, maintaining the cycling pool of ATG9 required for initiation of autophagy. In Homo sapiens (Human), this protein is TBC1 domain family member 14 (TBC1D14).